The sequence spans 448 residues: Glutamyl-tRNA reductase (448 aa).

Substrate contacts are provided by residues 49–52 (TCNR), S109, 114–116 (ETQ), and Q120. Catalysis depends on C50, which acts as the Nucleophile. 189–194 (GAGEMS) provides a ligand contact to NADP(+).

It belongs to the glutamyl-tRNA reductase family. As to quaternary structure, homodimer.

The catalysed reaction is (S)-4-amino-5-oxopentanoate + tRNA(Glu) + NADP(+) = L-glutamyl-tRNA(Glu) + NADPH + H(+). It functions in the pathway porphyrin-containing compound metabolism; protoporphyrin-IX biosynthesis; 5-aminolevulinate from L-glutamyl-tRNA(Glu): step 1/2. Functionally, catalyzes the NADPH-dependent reduction of glutamyl-tRNA(Glu) to glutamate 1-semialdehyde (GSA). This is Glutamyl-tRNA reductase from Staphylococcus aureus (strain MRSA252).